Consider the following 128-residue polypeptide: Sulfurtransferase TusD (128 aa).

The active-site Cysteine persulfide intermediate is the Cys78.

This sequence belongs to the DsrE/TusD family. Heterohexamer, formed by a dimer of trimers. The hexameric TusBCD complex contains 2 copies each of TusB, TusC and TusD. The TusBCD complex interacts with TusE.

It localises to the cytoplasm. In terms of biological role, part of a sulfur-relay system required for 2-thiolation of 5-methylaminomethyl-2-thiouridine (mnm(5)s(2)U) at tRNA wobble positions. Accepts sulfur from TusA and transfers it in turn to TusE. The chain is Sulfurtransferase TusD from Shigella flexneri serotype 5b (strain 8401).